We begin with the raw amino-acid sequence, 200 residues long: Neutrophil gelatinase-associated lipocalin (200 aa).

The signal sequence occupies residues 1 to 20 (MALSVMCLGLALLGVLQSQA). Gln21 is modified (pyrrolidone carboxylic acid). 72–74 (YST) is a binding site for a carboxymycobactin. Residues Asn81 and Asn85 are each glycosylated (N-linked (GlcNAc...) asparagine). Cysteines 98 and 197 form a disulfide. Tyr128 lines the enterobactin pocket. 3 residues coordinate a carboxymycobactin: Lys147, Lys156, and Tyr160. Lys156 serves as a coordination point for enterobactin.

Belongs to the calycin superfamily. Lipocalin family. As to quaternary structure, monomer. Homodimer; disulfide-linked. Heterodimer; disulfide-linked with MMP9. N-glycosylated. As to expression, expressed in the cortical tubules of the kidney (at protein level). Also expressed in the medullary tubules of the kidney. Detected in lung, spleen, uterus, vagina and epididymis.

It is found in the secreted. It localises to the cytoplasmic granule lumen. The protein localises to the cytoplasmic vesicle lumen. In terms of biological role, iron-trafficking protein involved in multiple processes such as apoptosis, innate immunity and renal development. Binds iron through association with 2,3-dihydroxybenzoic acid (2,3-DHBA), a siderophore that shares structural similarities with bacterial enterobactin, and delivers or removes iron from the cell, depending on the context. Iron-bound form (holo-24p3) is internalized following binding to the SLC22A17 (24p3R) receptor, leading to release of iron and subsequent increase of intracellular iron concentration. In contrast, association of the iron-free form (apo-24p3) with the SLC22A17 (24p3R) receptor is followed by association with an intracellular siderophore, iron chelation and iron transfer to the extracellular medium, thereby reducing intracellular iron concentration. Involved in apoptosis due to interleukin-3 (IL3) deprivation: iron-loaded form increases intracellular iron concentration without promoting apoptosis, while iron-free form decreases intracellular iron levels, inducing expression of the proapoptotic protein BCL2L11/BIM, resulting in apoptosis. Involved in innate immunity; limits bacterial proliferation by sequestering iron bound to microbial siderophores, such as enterobactin. Can also bind siderophores from M.tuberculosis. This is Neutrophil gelatinase-associated lipocalin (Lcn2) from Mus musculus (Mouse).